A 502-amino-acid chain; its full sequence is ATP synthase subunit alpha (502 aa).

Residue glycine 169–threonine 176 coordinates ATP.

It belongs to the ATPase alpha/beta chains family. As to quaternary structure, F-type ATPases have 2 components, CF(1) - the catalytic core - and CF(0) - the membrane proton channel. CF(1) has five subunits: alpha(3), beta(3), gamma(1), delta(1), epsilon(1). CF(0) has three main subunits: a(1), b(2) and c(9-12). The alpha and beta chains form an alternating ring which encloses part of the gamma chain. CF(1) is attached to CF(0) by a central stalk formed by the gamma and epsilon chains, while a peripheral stalk is formed by the delta and b chains.

It localises to the cell membrane. The catalysed reaction is ATP + H2O + 4 H(+)(in) = ADP + phosphate + 5 H(+)(out). In terms of biological role, produces ATP from ADP in the presence of a proton gradient across the membrane. The alpha chain is a regulatory subunit. The polypeptide is ATP synthase subunit alpha (Desulfitobacterium hafniense (strain Y51)).